Here is a 157-residue protein sequence, read N- to C-terminus: SsrA-binding protein (157 aa).

The interval 133–157 (HDKRNSIKEREGKREVERALKSRSR) is disordered.

It belongs to the SmpB family.

The protein resides in the cytoplasm. Required for rescue of stalled ribosomes mediated by trans-translation. Binds to transfer-messenger RNA (tmRNA), required for stable association of tmRNA with ribosomes. tmRNA and SmpB together mimic tRNA shape, replacing the anticodon stem-loop with SmpB. tmRNA is encoded by the ssrA gene; the 2 termini fold to resemble tRNA(Ala) and it encodes a 'tag peptide', a short internal open reading frame. During trans-translation Ala-aminoacylated tmRNA acts like a tRNA, entering the A-site of stalled ribosomes, displacing the stalled mRNA. The ribosome then switches to translate the ORF on the tmRNA; the nascent peptide is terminated with the 'tag peptide' encoded by the tmRNA and targeted for degradation. The ribosome is freed to recommence translation, which seems to be the essential function of trans-translation. In Verminephrobacter eiseniae (strain EF01-2), this protein is SsrA-binding protein.